A 110-amino-acid chain; its full sequence is uncharacterized protein (110 aa).

3 consecutive transmembrane segments (helical) span residues 5 to 25, 62 to 82, and 90 to 110; these read ILAI…PIHL, FPII…AIVS, and GISI…LISI.

The protein to A.fulgidus AF1754.

It localises to the cell membrane. This is an uncharacterized protein from Methanocaldococcus jannaschii (strain ATCC 43067 / DSM 2661 / JAL-1 / JCM 10045 / NBRC 100440) (Methanococcus jannaschii).